Here is a 102-residue protein sequence, read N- to C-terminus: Integration host factor subunit alpha (102 aa).

This sequence belongs to the bacterial histone-like protein family. As to quaternary structure, heterodimer of an alpha and a beta chain.

This protein is one of the two subunits of integration host factor, a specific DNA-binding protein that functions in genetic recombination as well as in transcriptional and translational control. This is Integration host factor subunit alpha from Chromohalobacter salexigens (strain ATCC BAA-138 / DSM 3043 / CIP 106854 / NCIMB 13768 / 1H11).